We begin with the raw amino-acid sequence, 510 residues long: NAD(P)H-quinone oxidoreductase subunit 2 B, chloroplastic (510 aa).

Helical transmembrane passes span 24-44 (LLLFDGSFIFPECILIFGLIL), 57-77 (IPWLYFISSTSLVMSITALLF), 99-119 (IFQFLILLCSTLCIPLSVEYI), 124-144 (MAITEFLLFVLTATLGGMFLC), 149-169 (LITIFVAPECFSLCSYLLSGY), 183-203 (YLLMGGASSSILVHGFSWLYG), 227-247 (PGISIALIFITVGIGFKLSPA), 295-315 (WHLLLEILAILSMILGNLIAI), 323-343 (MLAYSSIGQIGYVIIGIIVGD), 347-367 (GYASMITYMLFYIAMNLGTFA), 395-415 (ALSLALCLLSLGGLPPLAGFF), 418-438 (LHLFWCGWQAGLYFLVSIGLL), and 482-502 (LSMIVCVIASTIPGISMNPII).

The protein belongs to the complex I subunit 2 family. As to quaternary structure, NDH is composed of at least 16 different subunits, 5 of which are encoded in the nucleus.

It is found in the plastid. The protein resides in the chloroplast thylakoid membrane. It catalyses the reaction a plastoquinone + NADH + (n+1) H(+)(in) = a plastoquinol + NAD(+) + n H(+)(out). The enzyme catalyses a plastoquinone + NADPH + (n+1) H(+)(in) = a plastoquinol + NADP(+) + n H(+)(out). Its function is as follows. NDH shuttles electrons from NAD(P)H:plastoquinone, via FMN and iron-sulfur (Fe-S) centers, to quinones in the photosynthetic chain and possibly in a chloroplast respiratory chain. The immediate electron acceptor for the enzyme in this species is believed to be plastoquinone. Couples the redox reaction to proton translocation, and thus conserves the redox energy in a proton gradient. In Cucumis sativus (Cucumber), this protein is NAD(P)H-quinone oxidoreductase subunit 2 B, chloroplastic.